The following is a 522-amino-acid chain: 2-isopropylmalate synthase (522 aa).

The 263-residue stretch at 5-267 (VIIFDTTLRD…ETGINAKEIH (263 aa)) folds into the Pyruvate carboxyltransferase domain. Residues Asp-14, His-202, His-204, and Asn-238 each coordinate Mn(2+). The segment at 392–522 (QLQQLVVQSD…MHKNRELGGV (131 aa)) is regulatory domain.

This sequence belongs to the alpha-IPM synthase/homocitrate synthase family. LeuA type 1 subfamily. Homodimer. It depends on Mn(2+) as a cofactor.

Its subcellular location is the cytoplasm. The catalysed reaction is 3-methyl-2-oxobutanoate + acetyl-CoA + H2O = (2S)-2-isopropylmalate + CoA + H(+). Its pathway is amino-acid biosynthesis; L-leucine biosynthesis; L-leucine from 3-methyl-2-oxobutanoate: step 1/4. Its function is as follows. Catalyzes the condensation of the acetyl group of acetyl-CoA with 3-methyl-2-oxobutanoate (2-ketoisovalerate) to form 3-carboxy-3-hydroxy-4-methylpentanoate (2-isopropylmalate). This chain is 2-isopropylmalate synthase, found in Shewanella sp. (strain MR-4).